The sequence spans 245 residues: Ribonuclease 3 (245 aa).

The RNase III domain maps to 24–146 (YTVFSQKLGY…IIGAIYLESG (123 aa)). Glu-59 contributes to the Mg(2+) binding site. Asp-63 is a catalytic residue. The Mg(2+) site is built by Asn-132 and Glu-135. Glu-135 is a catalytic residue. A DRBM domain is found at 173–243 (DPKTLLQEYL…ARRAYKLAVV (71 aa)).

The protein belongs to the ribonuclease III family. In terms of assembly, homodimer. Mg(2+) serves as cofactor.

Its subcellular location is the cytoplasm. The enzyme catalyses Endonucleolytic cleavage to 5'-phosphomonoester.. In terms of biological role, digests double-stranded RNA. Involved in the processing of primary rRNA transcript to yield the immediate precursors to the large and small rRNAs (23S and 16S). Processes some mRNAs, and tRNAs when they are encoded in the rRNA operon. Processes pre-crRNA and tracrRNA of type II CRISPR loci if present in the organism. This chain is Ribonuclease 3, found in Nitrosomonas eutropha (strain DSM 101675 / C91 / Nm57).